The chain runs to 407 residues: Transcriptional regulator UL34 (407 aa).

Disordered regions lie at residues 267–330 (AAAG…EELF) and 388–407 (SPSV…PLCI). A compositionally biased stretch (acidic residues) spans 273-286 (EADENNDEGEEDDD). Residues 287-301 (ELRHSDPAPLHESKK) show a composition bias toward basic and acidic residues. The span at 302-312 (PRNARRPRTRV) shows a compositional bias: basic residues.

Belongs to the HHV-5 UL34 protein family.

Its subcellular location is the host nucleus. Its function is as follows. Acts as a transcriptional repressor of the US3 gene expression through a specific DNA sequence named the transcriptional repressive element (tre). This chain is Transcriptional regulator UL34 (UL34), found in Human cytomegalovirus (strain AD169) (HHV-5).